A 777-amino-acid chain; its full sequence is Phosphate transporter PHO1 homolog 10 (777 aa).

An SPX domain is found at 1 to 322; it reads MKFGKIFKKQ…SRNASRNYMK (322 aa). Topologically, residues 1–372 are cytoplasmic; the sequence is MKFGKIFKKQ…RPKVKRERHR (372 aa). A helical transmembrane segment spans residues 373–393; it reads VTFFSGFFSGCSIALVIAVVF. The Extracellular portion of the chain corresponds to 394-408; the sequence is KIESRKIMEKNYGTE. The chain crosses the membrane as a helical span at residues 409-429; the sequence is YMANIIPLYSLFGFIILHMLM. Topologically, residues 430-459 are cytoplasmic; it reads YSANIYFWKRYRVNYTFIFGFKQGTELGDR. The helical transmembrane segment at 460–480 threads the bilayer; that stretch reads EVFLVSTGLAVLAFVCFLLNL. The Extracellular portion of the chain corresponds to 481–496; sequence QLDMDWRMKHHKTLPE. The chain crosses the membrane as a helical span at residues 497–517; that stretch reads VIPLCLATIVLFILFCPFNII. The Cytoplasmic segment spans residues 518–646; that stretch reads YRSSRFFFIR…YELKKGRTWM (129 aa). One can recognise an EXS domain in the interval 581-775; the sequence is HSHGVYNAFY…HYYDDDDVDK (195 aa). The helical transmembrane segment at 647 to 667 threads the bilayer; it reads ILALVSSGVATGMNTFWDIVI. Over 668 to 691 the chain is Extracellular; the sequence is DWGLLRKHSKNPYLRDKLLVPHKS. Residues 692–712 traverse the membrane as a helical segment; sequence VYFAAMVVNVILRVAWMQLVL. Residues 713-777 are Cytoplasmic-facing; that stretch reads EFNLKSLHKI…YDDDDVDKDD (65 aa).

The protein belongs to the SYG1 (TC 2.A.94) family. As to expression, expressed in root epidermis and cortex, leaf blades and hydathodes, stems and flowers.

The protein localises to the cell membrane. In terms of biological role, may transport inorganic phosphate (Pi). This chain is Phosphate transporter PHO1 homolog 10 (PHO1-H10), found in Arabidopsis thaliana (Mouse-ear cress).